A 225-amino-acid chain; its full sequence is PKHD-type hydroxylase YbiX (225 aa).

The 100-residue stretch at Thr-78–Ser-177 folds into the Fe2OG dioxygenase domain. Positions 96, 98, and 158 each coordinate Fe cation. Position 168 (Arg-168) interacts with 2-oxoglutarate.

Fe(2+) is required as a cofactor. L-ascorbate serves as cofactor.

This is PKHD-type hydroxylase YbiX from Shigella boydii serotype 4 (strain Sb227).